We begin with the raw amino-acid sequence, 162 residues long: CASP-like protein BLE3 (162 aa).

At methionine 1–leucine 7 the chain is on the cytoplasmic side. Residues methionine 8 to valine 28 form a helical membrane-spanning segment. At threonine 29 to serine 50 the chain is on the extracellular side. A helical membrane pass occupies residues phenylalanine 51–valine 71. Over proline 72 to aspartate 85 the chain is Cytoplasmic. A helical membrane pass occupies residues valine 86 to alanine 106. Over lysine 107–histidine 128 the chain is Extracellular. Residues valine 129–tyrosine 149 form a helical membrane-spanning segment. Over serine 150–histidine 162 the chain is Cytoplasmic.

The protein belongs to the Casparian strip membrane proteins (CASP) family. As to quaternary structure, homodimer and heterodimers.

The protein localises to the cell membrane. In terms of biological role, involved in cell elongation in rice through dual regulation by brassinolide and auxin. The polypeptide is CASP-like protein BLE3 (BLE3) (Oryza sativa subsp. indica (Rice)).